The primary structure comprises 28 residues: Vasoactive intestinal peptide (28 aa).

Asn-28 carries the asparagine amide modification.

It belongs to the glucagon family.

The protein resides in the secreted. VIP is a neuropeptide involved in a diverse array of physiological processes through activating the PACAP subfamily of class B1 G protein-coupled receptors: VIP receptor 1 (VPR1) and VIP receptor 2 (VPR2). Abundantly expressed throughout the CNS and peripheral nervous systems where they primarily exert neuroprotective and immune modulatory roles. Also causes vasodilation, lowers arterial blood pressure, stimulates myocardial contractility, increases glycogenolysis and relaxes the smooth muscle of trachea, stomach and gall bladder. In Canis lupus familiaris (Dog), this protein is Vasoactive intestinal peptide (VIP).